The chain runs to 725 residues: Endoglucanase G (725 aa).

Residues 1-35 (MLKTKRKLTKAIGVALSISILSSLVSFIPQTNTYA) form the signal peptide. Asp93 functions as the Nucleophile in the catalytic mechanism. Residues His408, Asp446, and Glu455 contribute to the active site. In terms of domain architecture, CBM3 spans 489-650 (ITNDEVIIKA…GVKVFGNEPA (162 aa)). A Dockerin domain is found at 658-724 (PEILYGDVNS…LLGTITQLPQ (67 aa)).

Belongs to the glycosyl hydrolase 9 (cellulase E) family.

The enzyme catalyses Endohydrolysis of (1-&gt;4)-beta-D-glucosidic linkages in cellulose, lichenin and cereal beta-D-glucans.. The protein operates within glycan metabolism; cellulose degradation. Its function is as follows. The biological conversion of cellulose to glucose generally requires three types of hydrolytic enzymes: (1) Endoglucanases which cut internal beta-1,4-glucosidic bonds; (2) Exocellobiohydrolases that cut the disaccharide cellobiose from the non-reducing end of the cellulose polymer chain; (3) Beta-1,4-glucosidases which hydrolyze the cellobiose and other short cello-oligosaccharides to glucose. This is Endoglucanase G (celCCG) from Ruminiclostridium cellulolyticum (strain ATCC 35319 / DSM 5812 / JCM 6584 / H10) (Clostridium cellulolyticum).